A 488-amino-acid polypeptide reads, in one-letter code: UDP-N-acetylmuramoyl-L-alanyl-D-glutamate--2,6-diaminopimelate ligase (488 aa).

Serine 29 lines the UDP-N-acetyl-alpha-D-muramoyl-L-alanyl-D-glutamate pocket. 108-114 contacts ATP; the sequence is GTSGKTS. Residues 150-151, serine 177, glutamine 183, and arginine 185 contribute to the UDP-N-acetyl-alpha-D-muramoyl-L-alanyl-D-glutamate site; that span reads TT. Lysine 217 bears the N6-carboxylysine mark. Meso-2,6-diaminopimelate is bound by residues arginine 381, 405–408, glycine 453, and glutamate 457; that span reads DNPR. A Meso-diaminopimelate recognition motif motif is present at residues 405–408; that stretch reads DNPR.

It belongs to the MurCDEF family. MurE subfamily. Mg(2+) serves as cofactor. Carboxylation is probably crucial for Mg(2+) binding and, consequently, for the gamma-phosphate positioning of ATP.

It localises to the cytoplasm. The catalysed reaction is UDP-N-acetyl-alpha-D-muramoyl-L-alanyl-D-glutamate + meso-2,6-diaminopimelate + ATP = UDP-N-acetyl-alpha-D-muramoyl-L-alanyl-gamma-D-glutamyl-meso-2,6-diaminopimelate + ADP + phosphate + H(+). It participates in cell wall biogenesis; peptidoglycan biosynthesis. Catalyzes the addition of meso-diaminopimelic acid to the nucleotide precursor UDP-N-acetylmuramoyl-L-alanyl-D-glutamate (UMAG) in the biosynthesis of bacterial cell-wall peptidoglycan. The chain is UDP-N-acetylmuramoyl-L-alanyl-D-glutamate--2,6-diaminopimelate ligase from Brucella melitensis biotype 1 (strain ATCC 23456 / CCUG 17765 / NCTC 10094 / 16M).